Reading from the N-terminus, the 305-residue chain is Protoheme IX farnesyltransferase 2 (305 aa).

8 helical membrane-spanning segments follow: residues Val31–Ile51, Trp53–Ile73, Ala103–Asn123, Leu125–Leu145, Asn152–Thr172, Ala179–Ile199, Val231–Leu251, and Ala277–Val297.

The protein belongs to the UbiA prenyltransferase family. Protoheme IX farnesyltransferase subfamily.

It is found in the cell inner membrane. The enzyme catalyses heme b + (2E,6E)-farnesyl diphosphate + H2O = Fe(II)-heme o + diphosphate. It functions in the pathway porphyrin-containing compound metabolism; heme O biosynthesis; heme O from protoheme: step 1/1. In terms of biological role, converts heme B (protoheme IX) to heme O by substitution of the vinyl group on carbon 2 of heme B porphyrin ring with a hydroxyethyl farnesyl side group. The sequence is that of Protoheme IX farnesyltransferase 2 from Pseudoalteromonas atlantica (strain T6c / ATCC BAA-1087).